The following is a 1219-amino-acid chain: NHS-like protein 2 (1219 aa).

Disordered regions lie at residues 162–181, 288–321, 336–364, 400–423, 474–591, 669–741, 854–938, 979–1003, 1033–1087, and 1121–1197; these read FRSS…QSAK, FSNF…HSAP, FPSL…SDHP, TPSA…GNSW, GLLA…ELVL, QGSS…SASV, GAEE…STAS, IGLQ…KKPS, LEED…DKTA, and WKET…KTTN. The segment covering 288-312 has biased composition (polar residues); it reads FSNFSQRDQGHSSSPTGSLARSATS. A compositionally biased stretch (basic and acidic residues) spans 352–364; that stretch reads GDAHQARSASDHP. Position 499 is a phosphoserine (Ser-499). The span at 526–545 shows a compositional bias: polar residues; the sequence is ASTSSEGSNSTDNIAALSTE. Residues 549–567 show a composition bias toward basic residues; that stretch reads RHRRQRSKSISLKKAKKKP. A Phosphoserine modification is found at Ser-575. Positions 674 to 687 are enriched in low complexity; sequence SLASPSTSRATTPS. A Phosphoserine modification is found at Ser-690. 2 stretches are compositionally biased toward polar residues: residues 708–729 and 897–908; these read MSPS…SMSL and TSPTMAMASRSS. At Ser-1048 the chain carries Phosphoserine. The span at 1076–1087 shows a compositional bias: basic and acidic residues; that stretch reads AEEKSLISDKTA. A compositionally biased stretch (polar residues) spans 1131 to 1144; the sequence is SKPSSHSPVKNTAD. A compositionally biased stretch (low complexity) spans 1145-1160; it reads SPTGEAAAAPGPSSSA. Ser-1208 carries the phosphoserine modification.

The protein belongs to the NHS family.

The protein is NHS-like protein 2 of Mus musculus (Mouse).